A 956-amino-acid chain; its full sequence is Translation initiation factor IF-2 (956 aa).

The disordered stretch occupies residues Phe-50 to Pro-351. Over residues Ala-64 to Ala-95 the composition is skewed to pro residues. 2 stretches are compositionally biased toward low complexity: residues Pro-96 to Ala-107 and Pro-121 to Ala-136. The segment covering Ala-146–Thr-155 has biased composition (basic and acidic residues). 2 stretches are compositionally biased toward gly residues: residues Arg-171–Arg-192 and Arg-206–Gly-234. Low complexity predominate over residues Ser-235–Pro-254. The segment covering Ala-255–Gly-320 has biased composition (gly residues). Residues Val-324–Lys-333 are compositionally biased toward basic residues. The 172-residue stretch at Ala-448–Leu-619 folds into the tr-type G domain. Residues Gly-457–Thr-464 form a G1 region. Gly-457–Thr-464 serves as a coordination point for GTP. Residues Gly-482–His-486 form a G2 region. Positions Asp-507–Gly-510 are G3. Residues Asp-507–His-511 and Asn-561–Asp-564 contribute to the GTP site. The G4 stretch occupies residues Asn-561–Asp-564. Positions Ser-597–Lys-599 are G5.

Belongs to the TRAFAC class translation factor GTPase superfamily. Classic translation factor GTPase family. IF-2 subfamily.

It is found in the cytoplasm. One of the essential components for the initiation of protein synthesis. Protects formylmethionyl-tRNA from spontaneous hydrolysis and promotes its binding to the 30S ribosomal subunits. Also involved in the hydrolysis of GTP during the formation of the 70S ribosomal complex. This is Translation initiation factor IF-2 from Beutenbergia cavernae (strain ATCC BAA-8 / DSM 12333 / CCUG 43141 / JCM 11478 / NBRC 16432 / NCIMB 13614 / HKI 0122).